The following is a 619-amino-acid chain: 1-deoxy-D-xylulose-5-phosphate synthase (619 aa).

Thiamine diphosphate-binding positions include His80 and 121 to 123 (GHS). Asp152 is a Mg(2+) binding site. Thiamine diphosphate-binding positions include 153–154 (GA), Asn181, Tyr288, and Glu370. Mg(2+) is bound at residue Asn181.

The protein belongs to the transketolase family. DXPS subfamily. As to quaternary structure, homodimer. It depends on Mg(2+) as a cofactor. Requires thiamine diphosphate as cofactor.

The catalysed reaction is D-glyceraldehyde 3-phosphate + pyruvate + H(+) = 1-deoxy-D-xylulose 5-phosphate + CO2. Its pathway is metabolic intermediate biosynthesis; 1-deoxy-D-xylulose 5-phosphate biosynthesis; 1-deoxy-D-xylulose 5-phosphate from D-glyceraldehyde 3-phosphate and pyruvate: step 1/1. In terms of biological role, catalyzes the acyloin condensation reaction between C atoms 2 and 3 of pyruvate and glyceraldehyde 3-phosphate to yield 1-deoxy-D-xylulose-5-phosphate (DXP). The polypeptide is 1-deoxy-D-xylulose-5-phosphate synthase (Yersinia pseudotuberculosis serotype I (strain IP32953)).